A 634-amino-acid polypeptide reads, in one-letter code: MTVASTAAPSYTTSDTNRVISTFSVVDYVVFGLLLVLSLVIGLYHACRGWGRHTVGELLMADRKMGCLPVALSLLATFQSAVAILGGPAEIYRFGTQYWFLGCSYFLGLLIPAHIFIPVFYRLHLTSAYEYLELRFNKAVRICGTVTFIFQMVVYMGVALYAPSLALNAVTGFDLWLSVLALGIVCNIYTALGGLKAVIWTDVFQTLIMFLGQLVVIIVGAAKVGGLGHVWAVASQHGLISGIELDPDPFVRHTFWTLAFGGVFMMLSLYGVNQAQVQRYLSSHSEKAAVLSCYAVFPCQQVALCMSCLIGLVMFAYYKKYSMSPQQEQAAPDQLVLYFVMDLLKDMPGLPGLFVACLFSGSLSTISSAFNSLATVTMEDLIQPWFPQLTETRAIMLSRSLAFAYGLVCLGMAYVSSHLGSVLQAALSIFGMVGGPLLGLFCLGMFFPCANPLGAIVGLLTGLTMAFWIGIGSIVSRMSSAAASPPLNGSSSFLPSNLTVATVTTLMPSTLSKPTGLQQFYSLSYLWYSAHNSTTVIAVGLIVSLLTGGMRGRSLNPGTIYPVLPKLLALLPLSCQKRLCWRSHNQDIPVVTNLFPEKMGNGALQDSRDKERMAEDGLVHQPCSPTYIVQETSL.

12 helical membrane passes run F23–L43, M65–L85, F100–F120, I142–A162, L175–L195, L207–L227, F255–A275, A295–F315, L350–F370, F403–L423, L427–F447, and A455–V475. N-linked (GlcNAc...) asparagine glycans are attached at residues N488 and N497. The helical transmembrane segment at L526 to L546 threads the bilayer.

Belongs to the sodium:solute symporter (SSF) (TC 2.A.21) family. Interacts with PDZD11. Expressed in the jejunum (at protein level). Expressed in lung, skeletal muscle, heart, brain, kidney, intestine, liver, and placenta.

It localises to the cell membrane. The protein localises to the apical cell membrane. It carries out the reaction biotin(out) + 2 Na(+)(out) = biotin(in) + 2 Na(+)(in). It catalyses the reaction (R)-pantothenate(out) + 2 Na(+)(out) = (R)-pantothenate(in) + 2 Na(+)(in). The enzyme catalyses (R)-lipoate(out) + 2 Na(+)(out) = (R)-lipoate(in) + 2 Na(+)(in). The catalysed reaction is iodide(out) + 2 Na(+)(out) = iodide(in) + 2 Na(+)(in). In terms of biological role, sodium-dependent multivitamin transporter that mediates the electrogenic transport of pantothenate, biotin, lipoate and iodide. Functions as a Na(+)-coupled substrate symporter where the stoichiometry of Na(+):substrate is 2:1, creating an electrochemical Na(+) gradient used as driving force for substrate uptake. Required for biotin and pantothenate uptake in the intestine across the brush border membrane. Plays a role in the maintenance of intestinal mucosa integrity, by providing the gut mucosa with biotin. Contributes to the luminal uptake of biotin and pantothenate into the brain across the blood-brain barrier. This is Sodium-dependent multivitamin transporter from Rattus norvegicus (Rat).